The primary structure comprises 307 residues: 4-hydroxy-3-methylbut-2-enyl diphosphate reductase (307 aa).

[4Fe-4S] cluster is bound at residue cysteine 13. The (2E)-4-hydroxy-3-methylbut-2-enyl diphosphate site is built by histidine 42 and histidine 75. Dimethylallyl diphosphate contacts are provided by histidine 42 and histidine 75. Isopentenyl diphosphate is bound by residues histidine 42 and histidine 75. Cysteine 97 serves as a coordination point for [4Fe-4S] cluster. Position 125 (histidine 125) interacts with (2E)-4-hydroxy-3-methylbut-2-enyl diphosphate. A dimethylallyl diphosphate-binding site is contributed by histidine 125. Histidine 125 serves as a coordination point for isopentenyl diphosphate. Catalysis depends on glutamate 127, which acts as the Proton donor. A (2E)-4-hydroxy-3-methylbut-2-enyl diphosphate-binding site is contributed by threonine 165. Cysteine 195 provides a ligand contact to [4Fe-4S] cluster. Residues serine 223, serine 224, asparagine 225, and serine 267 each contribute to the (2E)-4-hydroxy-3-methylbut-2-enyl diphosphate site. The dimethylallyl diphosphate site is built by serine 223, serine 224, asparagine 225, and serine 267. Isopentenyl diphosphate is bound by residues serine 223, serine 224, asparagine 225, and serine 267.

The protein belongs to the IspH family. Requires [4Fe-4S] cluster as cofactor.

The catalysed reaction is isopentenyl diphosphate + 2 oxidized [2Fe-2S]-[ferredoxin] + H2O = (2E)-4-hydroxy-3-methylbut-2-enyl diphosphate + 2 reduced [2Fe-2S]-[ferredoxin] + 2 H(+). It carries out the reaction dimethylallyl diphosphate + 2 oxidized [2Fe-2S]-[ferredoxin] + H2O = (2E)-4-hydroxy-3-methylbut-2-enyl diphosphate + 2 reduced [2Fe-2S]-[ferredoxin] + 2 H(+). The protein operates within isoprenoid biosynthesis; dimethylallyl diphosphate biosynthesis; dimethylallyl diphosphate from (2E)-4-hydroxy-3-methylbutenyl diphosphate: step 1/1. Its pathway is isoprenoid biosynthesis; isopentenyl diphosphate biosynthesis via DXP pathway; isopentenyl diphosphate from 1-deoxy-D-xylulose 5-phosphate: step 6/6. Catalyzes the conversion of 1-hydroxy-2-methyl-2-(E)-butenyl 4-diphosphate (HMBPP) into a mixture of isopentenyl diphosphate (IPP) and dimethylallyl diphosphate (DMAPP). Acts in the terminal step of the DOXP/MEP pathway for isoprenoid precursor biosynthesis. The protein is 4-hydroxy-3-methylbut-2-enyl diphosphate reductase of Chlamydia trachomatis serovar L2b (strain UCH-1/proctitis).